We begin with the raw amino-acid sequence, 429 residues long: MAEGSRSPLRSFVEVAPGSHFPIQNLPFGVFRRRGSPEPEPPRPAVAIGDFALDLAAVSDAGLFHGPLLSASPCFRQETLNMFLGMGRPAWKEARATLQKILSADEPVLRDNEALKKKCLVPMSDTEMLLPITVGDYTDFFCSVHHARNCGFIFRGPQTPVNPNWFQLPVGYHGRASSVIVSGTDIIRPKGQGHPTGDSRPYFGPSKKLDFELEMAAIVGPGNELGKPIDINDAEEHIFGLMIMNDWSARDIQAWETIPLGPFLGKSFSTTVSPWIVTMDALKPFTCEAPKQEPEPLPYLAEKNHVNYDIPLEVWIKPKEQSEPSMVAKSNFKHLYWTLTQQLAHHTVNGCNLRPGDMFATGTLSGPETESLGCLLELTWNGQKEISVGNSTRKFLEDGDEVILTACCKGEGYNVGFGTCTGKVLPALP.

Ca(2+) is bound at residue D139. The active-site Proton acceptor is H146. Residue R155 participates in substrate binding. Residues E212, E214, and D246 each coordinate Ca(2+). Position 246 (D246) interacts with Mg(2+). Q253 contacts substrate. 2 residues coordinate Mg(2+): K266 and T270. T363 is a binding site for substrate.

The protein belongs to the FAH family. Ca(2+) serves as cofactor. It depends on Mg(2+) as a cofactor.

It catalyses the reaction 4-fumarylacetoacetate + H2O = acetoacetate + fumarate + H(+). The protein operates within amino-acid degradation; L-phenylalanine degradation; acetoacetate and fumarate from L-phenylalanine: step 6/6. Converts fumarylacetoacetate to acetoacetate and fumarate. Involved in tyrosine catabolic pathway. Catalyzes the final step in the tyrosine degradation pathway. The chain is Fumarylacetoacetase from Oryza sativa subsp. japonica (Rice).